Here is a 264-residue protein sequence, read N- to C-terminus: Thymidylate synthase (264 aa).

Arg21 is a binding site for dUMP. Position 51 (His51) interacts with (6R)-5,10-methylene-5,6,7,8-tetrahydrofolate. Residue 126–127 coordinates dUMP; the sequence is RR. The Nucleophile role is filled by Cys146. DUMP contacts are provided by residues 166–169, Asn177, and 207–209; these read RSGD and HLY. Asp169 is a binding site for (6R)-5,10-methylene-5,6,7,8-tetrahydrofolate. Ala263 contributes to the (6R)-5,10-methylene-5,6,7,8-tetrahydrofolate binding site.

The protein belongs to the thymidylate synthase family. Bacterial-type ThyA subfamily. Homodimer.

It localises to the cytoplasm. It catalyses the reaction dUMP + (6R)-5,10-methylene-5,6,7,8-tetrahydrofolate = 7,8-dihydrofolate + dTMP. It functions in the pathway pyrimidine metabolism; dTTP biosynthesis. Its function is as follows. Catalyzes the reductive methylation of 2'-deoxyuridine-5'-monophosphate (dUMP) to 2'-deoxythymidine-5'-monophosphate (dTMP) while utilizing 5,10-methylenetetrahydrofolate (mTHF) as the methyl donor and reductant in the reaction, yielding dihydrofolate (DHF) as a by-product. This enzymatic reaction provides an intracellular de novo source of dTMP, an essential precursor for DNA biosynthesis. This Xanthomonas axonopodis pv. citri (strain 306) protein is Thymidylate synthase.